The chain runs to 182 residues: Thymidine kinase (182 aa).

G8–T15 serves as a coordination point for ATP. E85 functions as the Proton acceptor in the catalytic mechanism. Position 117 (F117) interacts with substrate. C142 and C145 together coordinate Zn(2+). I161 to G165 is a binding site for substrate. C174 and C177 together coordinate Zn(2+).

The protein belongs to the thymidine kinase family.

It catalyses the reaction thymidine + ATP = dTMP + ADP + H(+). The polypeptide is Thymidine kinase (TK) (Amsacta moorei entomopoxvirus (AmEPV)).